The sequence spans 137 residues: Hemoglobin subunit beta (137 aa).

The Globin domain maps to 3 to 137 (HWTQEERDEI…VIDAISKQYH (135 aa)). Residues H54 and H83 each contribute to the heme b site.

It belongs to the globin family. As to quaternary structure, heterotetramer of two alpha chains and two beta chains. In terms of tissue distribution, red blood cells.

Involved in oxygen transport from gills to the various peripheral tissues. The sequence is that of Hemoglobin subunit beta (HBB) from Mustelus griseus (Spotless smooth-hound).